The following is a 387-amino-acid chain: Protein mab-21-like 3 (387 aa).

Belongs to the mab-21 family.

This is Protein mab-21-like 3 (mab21L3) from Danio rerio (Zebrafish).